Consider the following 91-residue polypeptide: MQPAARLLSRSVWKGPNIVPLPIREAMTKGTPIRTNARAATILPQFVGLKFQIHNGKEYVPIEISEDMVGHKLGEFAPTRKRFSYTQTKNK.

Belongs to the universal ribosomal protein uS19 family. As to quaternary structure, component of the mitochondrial small ribosomal subunit (mt-SSU). Mature yeast 74S mitochondrial ribosomes consist of a small (37S) and a large (54S) subunit. The 37S small subunit contains a 15S ribosomal RNA (15S mt-rRNA) and 34 different proteins. The 54S large subunit contains a 21S rRNA (21S mt-rRNA) and 46 different proteins.

It is found in the mitochondrion. Its function is as follows. Component of the mitochondrial ribosome (mitoribosome), a dedicated translation machinery responsible for the synthesis of mitochondrial genome-encoded proteins, including at least some of the essential transmembrane subunits of the mitochondrial respiratory chain. The mitoribosomes are attached to the mitochondrial inner membrane and translation products are cotranslationally integrated into the membrane. In Saccharomyces cerevisiae (strain ATCC 204508 / S288c) (Baker's yeast), this protein is Small ribosomal subunit protein uS19m (RSM19).